Here is a 100-residue protein sequence, read N- to C-terminus: MKGATLTRADLCEAVHEEVGLTRQDCAGLVERTLDLVAEALEQGETVKLSGFGVFQVRAKRARMGRNPKTGEPAEIEPRRVIGFRASQVMKARIDRALGG.

It belongs to the bacterial histone-like protein family. As to quaternary structure, heterodimer of an alpha and a beta chain.

This protein is one of the two subunits of integration host factor, a specific DNA-binding protein that functions in genetic recombination as well as in transcriptional and translational control. The polypeptide is Integration host factor subunit alpha (Caulobacter vibrioides (strain ATCC 19089 / CIP 103742 / CB 15) (Caulobacter crescentus)).